Consider the following 251-residue polypeptide: MDMKRRIHLELRNRTPAAVRELVLDNCKSNDGKIEGLTAEFVNLEFLSLINVGLISVSNLPKLPKLKKLELSENRIFGGLDMLAEKLPNLTHLNLSGNKLKDISTLEPLKKLECLKSLDLFNCEVTNLNDYRESVFKLLPQLTYLDGYDREDQEAPDSDAEVDGVDEEEEDEEGEDEEDEDDEDGEEEEFDEEDDEDEDVEGDEDDDEVSEEEEEFGLDEEDEDEDEDEEEEEGGKGEKRKRETDDEGEDD.

3 LRR repeats span residues 16 to 40 (PAAVRELVLDNCKSNDGKIEGLTAE), 43 to 64 (NLEFLSLINVGLISVSNLPKLP), and 65 to 84 (KLKKLELSENRIFGGLDMLA). N6-acetyllysine is present on Lys-86. Residues 89–110 (NLTHLNLSGNKLKDISTLEPLK) form an LRR 4 repeat. Positions 123–161 (CEVTNLNDYRESVFKLLPQLTYLDGYDREDQEAPDSDAE) constitute an LRRCT domain. The segment covering 149–233 (DREDQEAPDS…DEDEDEEEEE (85 aa)) has biased composition (acidic residues). The disordered stretch occupies residues 149-251 (DREDQEAPDS…RETDDEGEDD (103 aa)). Ser-158 carries the post-translational modification Phosphoserine. Basic and acidic residues predominate over residues 234 to 244 (GGKGEKRKRET). The short motif at 239–242 (KRKR) is the Nuclear localization signal element. Phosphothreonine is present on Thr-244.

The protein belongs to the ANP32 family. Interacts with histones H3 and H4. Interacts with KLF5; this interaction induces promoter region-specific histone incorporation and inhibition of histone acetylation by ANP32B. As to quaternary structure, (Microbial infection) Interacts with Sendai virus protein M. In terms of assembly, (Microbial infection) Interacts with Measles virus protein M. (Microbial infection) Interacts with Hendra virus protein M; this interaction promotes nuclear localization of M. As to quaternary structure, (Microbial infection) Interacts with influenza virus B protein PB2; this interaction strongly supports influenza B virus replication. Some glutamate residues are glycylated by TTLL8. This modification occurs exclusively on glutamate residues and results in a glycine chain on the gamma-carboxyl group. In terms of processing, directly cleaved by caspase-3/CASP3. As to expression, expressed in heart, lung, pancreas, prostate and in spleen, thymus and placenta.

The protein localises to the nucleus. The protein resides in the cytoplasm. Functionally, multifunctional protein that is involved in the regulation of many processes including cell proliferation, apoptosis, cell cycle progression or transcription. Regulates the proliferation of neuronal stem cells, differentiation of leukemic cells and progression from G1 to S phase of the cell cycle. As negative regulator of caspase-3-dependent apoptosis, may act as an antagonist of ANP32A in regulating tissue homeostasis. Exhibits histone chaperone properties, able to recruit histones to certain promoters, thus regulating the transcription of specific genes. Also plays an essential role in the nucleocytoplasmic transport of specific mRNAs via the uncommon nuclear mRNA export receptor XPO1/CRM1. Participates in the regulation of adequate adaptive immune responses by acting on mRNA expression and cell proliferation. Its function is as follows. (Microbial infection) Plays an essential role in influenza A and B viral genome replication. Also plays a role in foamy virus mRNA export from the nucleus to the cytoplasm. This Homo sapiens (Human) protein is Acidic leucine-rich nuclear phosphoprotein 32 family member B (ANP32B).